The primary structure comprises 427 residues: Adenylosuccinate synthetase (427 aa).

GTP-binding positions include 12-18 and 40-42; these read GDEGKGK and GHT. D13 acts as the Proton acceptor in catalysis. Positions 13 and 40 each coordinate Mg(2+). IMP-binding positions include 13-16, 38-41, T126, R140, Q221, T236, and R299; these read DEGK and NAGH. Catalysis depends on H41, which acts as the Proton donor. Residue 295-301 coordinates substrate; the sequence is STTNRPR. Residues R301, 327–329, and 409–411 contribute to the GTP site; these read KLD and SLG.

This sequence belongs to the adenylosuccinate synthetase family. In terms of assembly, homodimer. Mg(2+) is required as a cofactor.

It localises to the cytoplasm. The catalysed reaction is IMP + L-aspartate + GTP = N(6)-(1,2-dicarboxyethyl)-AMP + GDP + phosphate + 2 H(+). Its pathway is purine metabolism; AMP biosynthesis via de novo pathway; AMP from IMP: step 1/2. Its function is as follows. Plays an important role in the de novo pathway of purine nucleotide biosynthesis. Catalyzes the first committed step in the biosynthesis of AMP from IMP. The protein is Adenylosuccinate synthetase of Borrelia turicatae (strain 91E135).